Here is a 345-residue protein sequence, read N- to C-terminus: Adenosine kinase 2 (345 aa).

Residue aspartate 300 is part of the active site.

Belongs to the carbohydrate kinase PfkB family. As to quaternary structure, interacts with the begomovirus AL2 protein and the curtovirus L2 protein. Interacts with KIN11. It depends on Mg(2+) as a cofactor. Post-translationally, phosphorylated by KIN11. As to expression, widely expressed.

The protein localises to the cytoplasm. The enzyme catalyses adenosine + ATP = AMP + ADP + H(+). It participates in purine metabolism; AMP biosynthesis via salvage pathway; AMP from adenosine: step 1/1. Its activity is regulated as follows. Inactivated by the begomovirus AL2 protein or the curtovirus L2 protein. ATP dependent phosphorylation of adenosine and other related nucleoside analogs to monophosphate derivatives. Essential to sustain methyl recycling. The protein is Adenosine kinase 2 of Arabidopsis thaliana (Mouse-ear cress).